The chain runs to 563 residues: Arginine--tRNA ligase (563 aa).

Positions 121–131 (PNIAKPFSIGH) match the 'HIGH' region motif.

This sequence belongs to the class-I aminoacyl-tRNA synthetase family. In terms of assembly, monomer.

It localises to the cytoplasm. It carries out the reaction tRNA(Arg) + L-arginine + ATP = L-arginyl-tRNA(Arg) + AMP + diphosphate. The sequence is that of Arginine--tRNA ligase from Streptococcus equi subsp. equi (strain 4047).